A 312-amino-acid chain; its full sequence is MKQQYLLDYEATKASKNGMPVCKFDSCIPALQFCKENGIKMRGHVLVWHNQTPEWFFHKDYDVSKPLVDAATMERRLESYIKQVIEFCQKNYPGVVYCWDVVNEAILDDGSWREINNNWYTIMKEKYVEKAFYYARKYAKKDVALFYNDYNVFLPAKREAIYNLAQKLKEKGLIDGLGLQPTVGLNYPELDSDDIDSFKTTLETFAKLGLQIHITELNFEIKGDESNRTPENLKKQADRYYEMMKLLLKEDTDNGGPCNITCVTVFGICDDYPLYKNFKQCMYLWDKNCNPKPCFYSFLQAGLDWKASLLSK.

A GH10 domain is found at 1–301 (MKQQYLLDYE…KPCFYSFLQA (301 aa)). Glu104 (proton donor) is an active-site residue. Glu216 functions as the Nucleophile in the catalytic mechanism.

Belongs to the glycosyl hydrolase 10 (cellulase F) family.

It carries out the reaction Endohydrolysis of (1-&gt;4)-beta-D-xylosidic linkages in xylans.. The protein operates within glycan degradation; xylan degradation. Its function is as follows. Could be a xylanase. The chain is Putative endo-1,4-beta-xylanase from Caldicellulosiruptor saccharolyticus (Caldocellum saccharolyticum).